A 316-amino-acid chain; its full sequence is tRNA uridine(34) hydroxylase (316 aa).

Residues 123 to 217 (LDEDTVVIDA…YGKNPETRGE (95 aa)) form the Rhodanese domain. The active-site Cysteine persulfide intermediate is the Cys177.

Belongs to the TrhO family.

The catalysed reaction is uridine(34) in tRNA + AH2 + O2 = 5-hydroxyuridine(34) in tRNA + A + H2O. Its function is as follows. Catalyzes oxygen-dependent 5-hydroxyuridine (ho5U) modification at position 34 in tRNAs. The polypeptide is tRNA uridine(34) hydroxylase (Enterococcus faecalis (strain ATCC 700802 / V583)).